A 619-amino-acid polypeptide reads, in one-letter code: MGSVHGWIAWGGGLHGSDVEESEGMKKVRKVLEKAFSRKLYDSEVERIRTFEKELCLDTRVMIPFIFHGDRVVALPTTRYQDVDKSEKKYVEGVVMQLRRLVWRLMVWMHVPGGSSWIESLINEVFEATVSRDSDPVSLYKGARRRSGIRLMDLVMEVFKQNVSMVSEFGQRLARSAEDRMQGIPGSLSPEERKKEEEMLWKIKEHGERLCTKERQEEMVRAQKIICDVCAYVWEKDEDRMSFIMEVYSRHLCLKIVMPYTDIEVPLISYIDHHKLVSTDEKYKSVDIMAEVFKQAFIEHKGIDDESINNAVREVRERKRLEEMREMEERKRREEERAKNEEELLRMVEREEREKREKREKREESKGRGKRGAGEAKEESKEEDGKEEEGVEAEEEESAEVPLVETAVGGARRKKSLKGKRKGDGHHYKIHSRVLRWKRSAEKIKRELDKGSEERWKNRSIEEIKEQKKVHDIVEVSELIKSKECDRFFFRTGKYMKGGSERWKMVANGILEEGGEKKVGKVEVGLFKGERGESVVYHLMFRPTETERAGMVGGSSFGKGDDVDEIKKEESSDMSGFRYPPGVRCEMTSNGNEFRIEYRNPKNTSEVLRTLTILRIPEI.

A compositionally biased stretch (basic and acidic residues) spans 350–384; the sequence is REEREKREKREKREESKGRGKRGAGEAKEESKEED. Positions 350 to 428 are disordered; it reads REEREKREKR…GKRKGDGHHY (79 aa). The span at 385-399 shows a compositional bias: acidic residues; it reads GKEEEGVEAEEEESA. Over residues 411 to 428 the composition is skewed to basic residues; the sequence is ARRKKSLKGKRKGDGHHY.

The protein belongs to the UPF0329 family.

The polypeptide is UPF0329 protein ECU01_0100/ECU01_1510/ECU08_0030 (Encephalitozoon cuniculi (strain GB-M1) (Microsporidian parasite)).